We begin with the raw amino-acid sequence, 84 residues long: Dolichol phosphate-mannose biosynthesis regulatory protein (84 aa).

2 helical membrane passes run 11–31 (FGLV…VILL) and 49–69 (YAVL…GLFI).

This sequence belongs to the DPM2 family. As to quaternary structure, component of the dolichol-phosphate mannose (DPM) synthase complex composed of DPM1, DPM2 and DPM3; in the complex interacts directly with DPM3. Component of the glycosylphosphatidylinositol-N-acetylglucosaminyltransferase (GPI-GnT) complex composed at least by PIGA, PIGC, PIGH, PIGP, PIGQ, PIGY and DPM2. Interacts with PIGA, PIGC and PIGQ.

The protein localises to the endoplasmic reticulum membrane. The protein operates within protein modification; protein glycosylation. Regulates the biosynthesis of dolichol phosphate-mannose. Regulatory subunit of the dolichol-phosphate mannose (DPM) synthase complex; essential for the ER localization and stable expression of DPM1. Part of the glycosylphosphatidylinositol-N-acetylglucosaminyltransferase (GPI-GnT) complex that catalyzes the transfer of N-acetylglucosamine from UDP-N-acetylglucosamine to phosphatidylinositol and participates in the first step of GPI biosynthesis. May act by regulating the GPI-GNT complex. In Rattus norvegicus (Rat), this protein is Dolichol phosphate-mannose biosynthesis regulatory protein.